Consider the following 304-residue polypeptide: Negative regulator of the PHO system (304 aa).

One can recognise a Protein kinase domain in the interval 7 to 297 (FKQLEKVGNG…AKDALNHPWF (291 aa)). Residues 13–21 (VGNGTYATV) and Lys36 contribute to the ATP site. The active-site Proton acceptor is Asp133.

The protein belongs to the protein kinase superfamily. CMGC Ser/Thr protein kinase family. CDC2/CDKX subfamily. In terms of assembly, interacts with a number of cyclins.

It catalyses the reaction L-seryl-[protein] + ATP = O-phospho-L-seryl-[protein] + ADP + H(+). The enzyme catalyses L-threonyl-[protein] + ATP = O-phospho-L-threonyl-[protein] + ADP + H(+). When phosphate concentrations are high it phosphorylates the PHO4 transcription factor thus establishing repression. This is Negative regulator of the PHO system (PHO85) from Kluyveromyces lactis (strain ATCC 8585 / CBS 2359 / DSM 70799 / NBRC 1267 / NRRL Y-1140 / WM37) (Yeast).